The following is a 726-amino-acid chain: WD repeat and coiled-coil-containing protein (726 aa).

WD repeat units follow at residues 55–98 and 154–194; these read GQFE…SDKN and KSSG…LNAC. Residues 502–574 are disordered; sequence RSYDGDQSPT…PNFIQPSDVS (73 aa). Polar residues predominate over residues 506 to 515; the sequence is GDQSPTSSAN. Positions 517-533 are enriched in basic and acidic residues; the sequence is FDEKRNRLRMESFDTEP. Over residues 550 to 574 the composition is skewed to polar residues; that stretch reads SGSTSPKSECQNSSPPNFIQPSDVS. The stretch at 581-609 forms a coiled coil; the sequence is SISRNVERLCCNFAHLQQHLSELTDITRN.

The sequence is that of WD repeat and coiled-coil-containing protein (wdcp) from Xenopus laevis (African clawed frog).